Reading from the N-terminus, the 162-residue chain is Ribosome maturation factor RimP (162 aa).

Belongs to the RimP family.

The protein localises to the cytoplasm. Required for maturation of 30S ribosomal subunits. The protein is Ribosome maturation factor RimP of Cupriavidus taiwanensis (strain DSM 17343 / BCRC 17206 / CCUG 44338 / CIP 107171 / LMG 19424 / R1) (Ralstonia taiwanensis (strain LMG 19424)).